The chain runs to 253 residues: MTRKIDAPWLIGWRAFVLLPVVHGSHAVIEDVNALAHRIENIHHRSQESREMQLNGDIFDGVQLTILLDGLEVGDKCLSLVPGVRGLLLHDRKKCGICTRTKPDRGLFTAYFGGLPEEDHIRSRHFQFFNDYGYLLRSMDLDAYTAPIIAPIVPGVVDCVVIYNKVHHIPIPALKPLLALNVQYEWNTVTQQLRIRTPKIRSNSYVSRDVTTRRKRYREDRDSGEDLGAESKRGNGSVRYTGRELRDSIMSRI.

The interval 211-241 (TTRRKRYREDRDSGEDLGAESKRGNGSVRYT) is disordered.

This is an uncharacterized protein from Ictalurid herpesvirus 1 (strain Auburn) (IcHV-1).